The primary structure comprises 279 residues: Tryptophan synthase alpha chain (279 aa).

Residues Glu-50 and Asp-61 each act as proton acceptor in the active site.

It belongs to the TrpA family. In terms of assembly, tetramer of two alpha and two beta chains.

It carries out the reaction (1S,2R)-1-C-(indol-3-yl)glycerol 3-phosphate + L-serine = D-glyceraldehyde 3-phosphate + L-tryptophan + H2O. The protein operates within amino-acid biosynthesis; L-tryptophan biosynthesis; L-tryptophan from chorismate: step 5/5. In terms of biological role, the alpha subunit is responsible for the aldol cleavage of indoleglycerol phosphate to indole and glyceraldehyde 3-phosphate. This Brucella suis biovar 1 (strain 1330) protein is Tryptophan synthase alpha chain.